Reading from the N-terminus, the 334-residue chain is MKVSKIYTTIDAHVAGEPLRIITGGVPEIKGETQLERRAYCMEHLDYLREILMYEPRGHHGMYGCIITPPASAHADFGVLFMHNEGWSTMCGHGIIAVITVGIETGMFEVTGEKQKFIIDSPAGEVIAYATYSGSEVESVSFENVPSFVYKKDVPIKIDSYEFQVDIAFGGAFYAVVDSKEFGLKVDFKDLSAIQMWGGKIKHYIESKMEVKHPLEEGLKGIYGVIFSDDPKEKDATLRNVTIFADGQVDRSPCGTGTSARIATLFAKDALQKGEIFVHECITDGKFEGEVLSVTAVHTYEAVVPKVTGNAFITGFHQFVVDPRDDLNRGFLLG.

The active-site Proton acceptor is the Cys91. Substrate is bound by residues 92 to 93, Asp250, and 255 to 256; these read GH and GT.

Belongs to the proline racemase family.

It catalyses the reaction trans-3-hydroxy-L-proline = 1-pyrroline-2-carboxylate + H2O. In terms of biological role, catalyzes the dehydration of trans-3-hydroxy-L-proline (t3LHyp) to Delta(1)-pyrroline-2-carboxylate (Pyr2C). Is likely involved in a degradation pathway that converts t3LHyp to L-proline, which allows B.cereus to grow on t3LHyp as a sole carbon source. Displays no proline racemase activity. This Bacillus cereus (strain ATCC 14579 / DSM 31 / CCUG 7414 / JCM 2152 / NBRC 15305 / NCIMB 9373 / NCTC 2599 / NRRL B-3711) protein is Trans-3-hydroxy-L-proline dehydratase.